Consider the following 353-residue polypeptide: DNA-directed RNA polymerase subunit alpha (353 aa).

The tract at residues 1 to 234 (MVQEKVRVST…DLFIPFLHTE (234 aa)) is alpha N-terminal domain (alpha-NTD). The tract at residues 266 to 353 (KKIALKSIFI…LAQSIYSESG (88 aa)) is alpha C-terminal domain (alpha-CTD).

It belongs to the RNA polymerase alpha chain family. In plastids the minimal PEP RNA polymerase catalytic core is composed of four subunits: alpha, beta, beta', and beta''. When a (nuclear-encoded) sigma factor is associated with the core the holoenzyme is formed, which can initiate transcription.

Its subcellular location is the plastid. The protein localises to the chloroplast. The catalysed reaction is RNA(n) + a ribonucleoside 5'-triphosphate = RNA(n+1) + diphosphate. Its function is as follows. DNA-dependent RNA polymerase catalyzes the transcription of DNA into RNA using the four ribonucleoside triphosphates as substrates. The sequence is that of DNA-directed RNA polymerase subunit alpha from Panax ginseng (Korean ginseng).